The sequence spans 459 residues: Cysteine--tRNA ligase (459 aa).

C31 provides a ligand contact to Zn(2+). The 'HIGH' region motif lies at 33-43; that stretch reads PTVYDNPHIGN. The Zn(2+) site is built by C216, H241, and E245. The 'KMSKS' region signature appears at 274 to 278; that stretch reads KMSKS. K277 contacts ATP.

Belongs to the class-I aminoacyl-tRNA synthetase family. Monomer. Zn(2+) is required as a cofactor.

The protein localises to the cytoplasm. The enzyme catalyses tRNA(Cys) + L-cysteine + ATP = L-cysteinyl-tRNA(Cys) + AMP + diphosphate. The sequence is that of Cysteine--tRNA ligase from Rickettsia felis (strain ATCC VR-1525 / URRWXCal2) (Rickettsia azadi).